Here is a 541-residue protein sequence, read N- to C-terminus: T-complex protein 1 subunit epsilon (541 aa).

Ala2 is modified (N-acetylalanine). A Glycyl lysine isopeptide (Lys-Gly) (interchain with G-Cter in SUMO2) cross-link involves residue Lys20. Ser26 is subject to Phosphoserine. Gly53 contributes to the ADP binding site. Gly53 contributes to the ATP binding site. Asp104 serves as a coordination point for Mg(2+). Positions 105, 106, 107, and 175 each coordinate ADP. The ATP site is built by Thr106 and Thr107. Residues Lys210, Lys214, Lys265, Lys275, and Lys279 each participate in a glycyl lysine isopeptide (Lys-Gly) (interchain with G-Cter in SUMO2) cross-link. Position 346 is a phosphoserine (Ser346). Lys392 is covalently cross-linked (Glycyl lysine isopeptide (Lys-Gly) (interchain with G-Cter in SUMO2)). ADP is bound by residues Gly422, Asp492, Glu508, and Lys513. Gly422 is an ATP binding site. At Ser539 the chain carries Phosphoserine.

Belongs to the TCP-1 chaperonin family. Component of the chaperonin-containing T-complex (TRiC), a hexadecamer composed of two identical back-to-back stacked rings enclosing a protein folding chamber. Each ring is made up of eight different subunits: TCP1/CCT1, CCT2, CCT3, CCT4, CCT5, CCT6A/CCT6, CCT7, CCT8. Interacts with PACRG. Interacts with DNAAF4. Interacts with DLEC1. Interacts with SPMAP2. Post-translationally, ubiquitinated by the DCX(DCAF12) complex specifically recognizes the diglutamate (Glu-Glu) at the C-terminus, leading to its degradation.

The protein localises to the cytoplasm. It localises to the cytoskeleton. The protein resides in the microtubule organizing center. Its subcellular location is the centrosome. It carries out the reaction ATP + H2O = ADP + phosphate + H(+). Functionally, component of the chaperonin-containing T-complex (TRiC), a molecular chaperone complex that assists the folding of actin, tubulin and other proteins upon ATP hydrolysis. The TRiC complex mediates the folding of WRAP53/TCAB1, thereby regulating telomere maintenance. As part of the TRiC complex may play a role in the assembly of BBSome, a complex involved in ciliogenesis regulating transports vesicles to the cilia. The protein is T-complex protein 1 subunit epsilon (CCT5) of Pongo abelii (Sumatran orangutan).